A 152-amino-acid polypeptide reads, in one-letter code: Transcriptional regulator MraZ (152 aa).

2 consecutive SpoVT-AbrB domains span residues 5 to 52 (ATQI…TLSE) and 81 to 124 (ASEC…DEQA).

It belongs to the MraZ family. In terms of assembly, forms oligomers.

The protein resides in the cytoplasm. Its subcellular location is the nucleoid. Its function is as follows. Negatively regulates its own expression and that of the subsequent genes in the proximal part of the division and cell wall (dcw) gene cluster. Acts by binding directly to DNA. May also regulate the expression of genes outside the dcw cluster. This chain is Transcriptional regulator MraZ, found in Photorhabdus laumondii subsp. laumondii (strain DSM 15139 / CIP 105565 / TT01) (Photorhabdus luminescens subsp. laumondii).